A 319-amino-acid chain; its full sequence is Lipoyl synthase (319 aa).

The tract at residues Leu5–Lys31 is disordered. [4Fe-4S] cluster contacts are provided by Cys61, Cys66, Cys72, Cys87, Cys91, Cys94, and Ser300. The 217-residue stretch at Trp73–Leu289 folds into the Radical SAM core domain.

This sequence belongs to the radical SAM superfamily. Lipoyl synthase family. Requires [4Fe-4S] cluster as cofactor.

The protein localises to the cytoplasm. The enzyme catalyses [[Fe-S] cluster scaffold protein carrying a second [4Fe-4S](2+) cluster] + N(6)-octanoyl-L-lysyl-[protein] + 2 oxidized [2Fe-2S]-[ferredoxin] + 2 S-adenosyl-L-methionine + 4 H(+) = [[Fe-S] cluster scaffold protein] + N(6)-[(R)-dihydrolipoyl]-L-lysyl-[protein] + 4 Fe(3+) + 2 hydrogen sulfide + 2 5'-deoxyadenosine + 2 L-methionine + 2 reduced [2Fe-2S]-[ferredoxin]. Its pathway is protein modification; protein lipoylation via endogenous pathway; protein N(6)-(lipoyl)lysine from octanoyl-[acyl-carrier-protein]: step 2/2. In terms of biological role, catalyzes the radical-mediated insertion of two sulfur atoms into the C-6 and C-8 positions of the octanoyl moiety bound to the lipoyl domains of lipoate-dependent enzymes, thereby converting the octanoylated domains into lipoylated derivatives. In Nitrobacter winogradskyi (strain ATCC 25391 / DSM 10237 / CIP 104748 / NCIMB 11846 / Nb-255), this protein is Lipoyl synthase.